The sequence spans 188 residues: ATP synthase subunit b, chloroplastic (188 aa).

Residues 35–57 (LINLAVVIGVLVYFGKGVLTTLL) form a helical membrane-spanning segment.

This sequence belongs to the ATPase B chain family. As to quaternary structure, F-type ATPases have 2 components, F(1) - the catalytic core - and F(0) - the membrane proton channel. F(1) has five subunits: alpha(3), beta(3), gamma(1), delta(1), epsilon(1). F(0) has four main subunits: a(1), b(1), b'(1) and c(10-14). The alpha and beta chains form an alternating ring which encloses part of the gamma chain. F(1) is attached to F(0) by a central stalk formed by the gamma and epsilon chains, while a peripheral stalk is formed by the delta, b and b' chains.

It is found in the plastid. The protein localises to the chloroplast thylakoid membrane. In terms of biological role, f(1)F(0) ATP synthase produces ATP from ADP in the presence of a proton or sodium gradient. F-type ATPases consist of two structural domains, F(1) containing the extramembraneous catalytic core and F(0) containing the membrane proton channel, linked together by a central stalk and a peripheral stalk. During catalysis, ATP synthesis in the catalytic domain of F(1) is coupled via a rotary mechanism of the central stalk subunits to proton translocation. Its function is as follows. Component of the F(0) channel, it forms part of the peripheral stalk, linking F(1) to F(0). The protein is ATP synthase subunit b, chloroplastic of Zygnema circumcarinatum (Green alga).